Consider the following 388-residue polypeptide: tRNA-specific 2-thiouridylase MnmA (388 aa).

ATP contacts are provided by residues 26–33 (GLSGGVDS) and Leu52. The active-site Nucleophile is Cys113. The cysteines at positions 113 and 223 are disulfide-linked. Gly138 provides a ligand contact to ATP. Residues 173–175 (KDQ) form an interaction with tRNA region. Residue Cys223 is the Cysteine persulfide intermediate of the active site. The interaction with tRNA stretch occupies residues 328 to 329 (RY).

Belongs to the MnmA/TRMU family.

The protein resides in the cytoplasm. It carries out the reaction S-sulfanyl-L-cysteinyl-[protein] + uridine(34) in tRNA + AH2 + ATP = 2-thiouridine(34) in tRNA + L-cysteinyl-[protein] + A + AMP + diphosphate + H(+). In terms of biological role, catalyzes the 2-thiolation of uridine at the wobble position (U34) of tRNA, leading to the formation of s(2)U34. This Prochlorococcus marinus (strain NATL2A) protein is tRNA-specific 2-thiouridylase MnmA.